The sequence spans 263 residues: Mannose-specific lectin 2 (263 aa).

An N-terminal signal peptide occupies residues 1-24 (MAKSLVLSSLLLALLLAAPLASLA). Bulb-type lectin domains follow at residues 26-136 (NNVL…APNR) and 150-260 (RNVL…SSAS). 2 cysteine pairs are disulfide-bonded: cysteine 54–cysteine 76 and cysteine 178–cysteine 203.

Heterotetramer of 2 domain 1 and 2 domain 2 chains arranged as a dimer of domain 1/domain 2 heterodimers.

Functionally, mannose-specific lectin. Has weak agglutinating activity towards trypsin-treated erythrocytes from rabbit but not from human. The protein is Mannose-specific lectin 2 of Crocus vernus (Dutch crocus).